The sequence spans 524 residues: Putative ribose/galactose/methyl galactoside import ATP-binding protein 1 (524 aa).

2 consecutive ABC transporter domains span residues 35–271 and 281–520; these read LEVR…VGRE and VPIG…RIMD. 67 to 74 is an ATP binding site; the sequence is GENGAGKS.

This sequence belongs to the ABC transporter superfamily. Carbohydrate importer 2 (CUT2) (TC 3.A.1.2) family.

The protein resides in the cell inner membrane. The catalysed reaction is D-ribose(out) + ATP + H2O = D-ribose(in) + ADP + phosphate + H(+). The enzyme catalyses D-galactose(out) + ATP + H2O = D-galactose(in) + ADP + phosphate + H(+). Part of an ABC transporter complex involved in carbohydrate import. Could be involved in ribose, galactose and/or methyl galactoside import. Responsible for energy coupling to the transport system. The protein is Putative ribose/galactose/methyl galactoside import ATP-binding protein 1 of Burkholderia cenocepacia (strain HI2424).